A 248-amino-acid chain; its full sequence is Large ribosomal subunit protein uL30A (248 aa).

The disordered stretch occupies residues 1–44; the sequence is MSQKKQKIQVEQKVPENVAKKTQRDSKLRDAVAKRRTERLAANK. A compositionally biased stretch (basic and acidic residues) spans 8–41; the sequence is IQVEQKVPENVAKKTQRDSKLRDAVAKRRTERLA.

It belongs to the universal ribosomal protein uL30 family.

In terms of biological role, binds to G-rich structures in 28S rRNA and in mRNAs. Plays a regulatory role in the translation apparatus; inhibits cell-free translation of mRNAs. This is Large ribosomal subunit protein uL30A (Rpl7-1) from Paramecium tetraurelia.